A 227-amino-acid chain; its full sequence is UPF0758 protein lpl2409 (227 aa).

The MPN domain occupies 102 to 225; the sequence is RLSNTQQTYA…YSIFAENKWA (124 aa). The Zn(2+) site is built by His173, His175, and Asp186. The JAMM motif signature appears at 173–186; the sequence is HNHPSGLSDASQQD.

The protein belongs to the UPF0758 family.

In Legionella pneumophila (strain Lens), this protein is UPF0758 protein lpl2409.